Consider the following 398-residue polypeptide: Secreted aspartic protease 3 (398 aa).

Residues 1-18 (MFLKNIFIALAIALLADA) form the signal peptide. Residues 19 to 58 (TPTTFNNSPGFVALNFDVIKTHKNVTGPQGEINTNVNVKR) constitute a propeptide, activation peptide. Residue asparagine 42 is glycosylated (N-linked (GlcNAc...) asparagine). Positions 72 to 384 (YASDITVGSN…DLDDNEISLA (313 aa)) constitute a Peptidase A1 domain. Aspartate 90 is an active-site residue. 90-92 (DTG) contacts pepstatin A. Residues 103 to 112 (VSCQAGQGQD) are compositionally biased toward polar residues. The segment at 103 to 139 (VSCQAGQGQDPNFCKNEGTYSPSSSSSSQNLNSPFSI) is disordered. An intrachain disulfide couples cysteine 105 to cysteine 116. The span at 123–138 (SPSSSSSSQNLNSPFS) shows a compositional bias: low complexity. 140-143 (EYGD) provides a ligand contact to pepstatin A. Zn(2+)-binding residues include histidine 188, aspartate 248, histidine 254, and aspartate 270. The active site involves aspartate 274. Residue 274–278 (DSGTT) coordinates pepstatin A. Cysteine 312 and cysteine 350 are disulfide-bonded. Residue asparagine 313 is glycosylated (N-linked (GlcNAc...) asparagine).

Belongs to the peptidase A1 family. In terms of assembly, monomer.

It localises to the secreted. It catalyses the reaction Preferential cleavage at the carboxyl of hydrophobic amino acids, but fails to cleave 15-Leu-|-Tyr-16, 16-Tyr-|-Leu-17 and 24-Phe-|-Phe-25 of insulin B chain. Activates trypsinogen, and degrades keratin.. Inhibited by pepstatin A analogs. In terms of biological role, secreted aspartic peptidases (SAPs) are a group of ten acidic hydrolases considered as key virulence factors. These enzymes supply the fungus with nutrient amino acids as well as are able to degrade the selected host's proteins involved in the immune defense. Induces host inflammatory cytokine production in a proteolytic activity-independent way. Moreover, acts toward human hemoglobin though limited proteolysis to generate a variety of antimicrobial hemocidins, enabling to compete with the other microorganisms of the same physiological niche using the microbicidal peptides generated from the host protein. Functionally, plays a key role in defense against host by cleaving histatin-5 (Hst 5), a peptide from human saliva that carries out fungicidal activity. The cleavage rate decreases in an order of SAP2 &gt; SAP9 &gt; SAP3 &gt; SAP7 &gt; SAP4 &gt; SAP1 &gt; SAP8. The first cleavage occurs between residues 'Lys-17' and 'His-18' of Hst 5, giving DSHAKRHHGYKRKFHEK and HHSHRGY peptides. Simultaneously, the DSHAKRHHGYKRK peptide is also formed. Further fragmentation by SAP3 results in DSHAKRHHGY and KRKFHEK products. The sequence is that of Secreted aspartic protease 3 from Candida albicans (strain SC5314 / ATCC MYA-2876) (Yeast).